A 1060-amino-acid chain; its full sequence is Carbamoyl phosphate synthase large chain (1060 aa).

The segment at 1 to 401 (MPKRTDIRKI…SLLKACRSLE (401 aa)) is carboxyphosphate synthetic domain. The ATP site is built by Arg129, Arg169, Gly175, Gly176, Arg208, Ile210, Glu215, Gly241, Ile242, His243, Gln284, and Glu298. The region spanning 133 to 327 (KQLMEELNQP…IAKLAAKIAV (195 aa)) is the ATP-grasp 1 domain. Mg(2+)-binding residues include Gln284, Glu298, and Asn300. Positions 284, 298, and 300 each coordinate Mn(2+). The segment at 402 to 546 (IGVDHIKIAD…YSTYAVENES (145 aa)) is oligomerization domain. Residues 547–929 (LISDKASILV…ALYKAFEAAY (383 aa)) are carbamoyl phosphate synthetic domain. Residues 671–861 (EATLQALNIP…MAQVATKVIL (191 aa)) enclose the ATP-grasp 2 domain. Positions 707, 746, 748, 752, 777, 778, 779, 780, 820, and 832 each coordinate ATP. The Mg(2+) site is built by Gln820, Glu832, and Asn834. Positions 820, 832, and 834 each coordinate Mn(2+). The region spanning 930-1060 (LHMPDYGNIV…SRAFTLKVLD (131 aa)) is the MGS-like domain. The allosteric domain stretch occupies residues 930–1060 (LHMPDYGNIV…SRAFTLKVLD (131 aa)).

Belongs to the CarB family. As to quaternary structure, composed of two chains; the small (or glutamine) chain promotes the hydrolysis of glutamine to ammonia, which is used by the large (or ammonia) chain to synthesize carbamoyl phosphate. Tetramer of heterodimers (alpha,beta)4. The cofactor is Mg(2+). It depends on Mn(2+) as a cofactor.

The enzyme catalyses hydrogencarbonate + L-glutamine + 2 ATP + H2O = carbamoyl phosphate + L-glutamate + 2 ADP + phosphate + 2 H(+). It catalyses the reaction hydrogencarbonate + NH4(+) + 2 ATP = carbamoyl phosphate + 2 ADP + phosphate + 2 H(+). It functions in the pathway amino-acid biosynthesis; L-arginine biosynthesis; carbamoyl phosphate from bicarbonate: step 1/1. The protein operates within pyrimidine metabolism; UMP biosynthesis via de novo pathway; (S)-dihydroorotate from bicarbonate: step 1/3. Large subunit of the glutamine-dependent carbamoyl phosphate synthetase (CPSase). CPSase catalyzes the formation of carbamoyl phosphate from the ammonia moiety of glutamine, carbonate, and phosphate donated by ATP, constituting the first step of 2 biosynthetic pathways, one leading to arginine and/or urea and the other to pyrimidine nucleotides. The large subunit (synthetase) binds the substrates ammonia (free or transferred from glutamine from the small subunit), hydrogencarbonate and ATP and carries out an ATP-coupled ligase reaction, activating hydrogencarbonate by forming carboxy phosphate which reacts with ammonia to form carbamoyl phosphate. In Streptococcus agalactiae serotype III (strain NEM316), this protein is Carbamoyl phosphate synthase large chain.